Reading from the N-terminus, the 243-residue chain is Adenosylcobinamide-GDP ribazoletransferase (243 aa).

Transmembrane regions (helical) follow at residues 31–51 (LLWYPAVGLLLGLLLWLAHLL), 61–81 (AAIILALWVGLSGGLHLDGLA), 109–129 (IAVVVLVLLLLLKFAALLSLL), 134–154 (GIYLVLLPWLGRSLLPLLLAT), and 188–208 (LLLGWGALIALATALALFVWL).

The protein belongs to the CobS family. It depends on Mg(2+) as a cofactor.

The protein localises to the cell inner membrane. It carries out the reaction alpha-ribazole + adenosylcob(III)inamide-GDP = adenosylcob(III)alamin + GMP + H(+). The enzyme catalyses alpha-ribazole 5'-phosphate + adenosylcob(III)inamide-GDP = adenosylcob(III)alamin 5'-phosphate + GMP + H(+). The protein operates within cofactor biosynthesis; adenosylcobalamin biosynthesis; adenosylcobalamin from cob(II)yrinate a,c-diamide: step 7/7. Joins adenosylcobinamide-GDP and alpha-ribazole to generate adenosylcobalamin (Ado-cobalamin). Also synthesizes adenosylcobalamin 5'-phosphate from adenosylcobinamide-GDP and alpha-ribazole 5'-phosphate. This Ectopseudomonas mendocina (strain ymp) (Pseudomonas mendocina) protein is Adenosylcobinamide-GDP ribazoletransferase.